The sequence spans 240 residues: Large ribosomal subunit protein uL1 (240 aa).

It belongs to the universal ribosomal protein uL1 family. In terms of assembly, part of the 50S ribosomal subunit.

In terms of biological role, binds directly to 23S rRNA. The L1 stalk is quite mobile in the ribosome, and is involved in E site tRNA release. Protein L1 is also a translational repressor protein, it controls the translation of the L11 operon by binding to its mRNA. This Nocardioides sp. (strain ATCC BAA-499 / JS614) protein is Large ribosomal subunit protein uL1.